The sequence spans 288 residues: ATP synthase gamma chain (288 aa).

Belongs to the ATPase gamma chain family. In terms of assembly, F-type ATPases have 2 components, CF(1) - the catalytic core - and CF(0) - the membrane proton channel. CF(1) has five subunits: alpha(3), beta(3), gamma(1), delta(1), epsilon(1). CF(0) has three main subunits: a, b and c.

The protein localises to the cell inner membrane. In terms of biological role, produces ATP from ADP in the presence of a proton gradient across the membrane. The gamma chain is believed to be important in regulating ATPase activity and the flow of protons through the CF(0) complex. This Rickettsia canadensis (strain McKiel) protein is ATP synthase gamma chain.